The following is a 265-amino-acid chain: Hydroxyethylthiazole kinase 2 (265 aa).

A substrate-binding site is contributed by Met-39. ATP-binding residues include Lys-115 and Thr-168. A substrate-binding site is contributed by Gly-195.

This sequence belongs to the Thz kinase family. It depends on Mg(2+) as a cofactor.

It carries out the reaction 5-(2-hydroxyethyl)-4-methylthiazole + ATP = 4-methyl-5-(2-phosphooxyethyl)-thiazole + ADP + H(+). It participates in cofactor biosynthesis; thiamine diphosphate biosynthesis; 4-methyl-5-(2-phosphoethyl)-thiazole from 5-(2-hydroxyethyl)-4-methylthiazole: step 1/1. Functionally, catalyzes the phosphorylation of the hydroxyl group of 4-methyl-5-beta-hydroxyethylthiazole (THZ). The protein is Hydroxyethylthiazole kinase 2 of Clostridium botulinum (strain Langeland / NCTC 10281 / Type F).